The primary structure comprises 166 residues: uncharacterized protein (166 aa).

4Fe-4S ferredoxin-type domains lie at 44–73 (AREDLFSAVCNGCGECASACPNGLIQLKQQ), 75–104 (ATLEIDYAPCDLCGKCAEVCPTNALHPNFP), and 139–166 (STLEIDNERCNGCGECKITCFVAAITLK). [4Fe-4S] cluster contacts are provided by cysteine 53, cysteine 56, cysteine 59, cysteine 63, cysteine 84, cysteine 87, cysteine 90, and cysteine 94.

This is an uncharacterized protein from Haemophilus influenzae (strain ATCC 51907 / DSM 11121 / KW20 / Rd).